The chain runs to 634 residues: MQHSSMKVDLSNFFKDERRNSLVFIDAAWNNIKDLQDHIQNLFSLKDISLLTSDGCYLPPRESIKVLNSAEGLKAFRFASHDSDTFVSPAPVKSSKKRKNRSVEEQVHLTASTPLRPSKRSKNQNNSEWINIAENPSRVRKKELLDMAPGPSVQSKLLTNKGTPKAPETQTEVSNMSANIETENKESAPQIKNKSKNKKPTKSPEASDQVENEPAPKSISRCTLKEGKMSESKNQETSPDILSEKSGVVTKENETREEQQDKTHLESNKIPDKLSQLKAGDQIEKSPGIAASLLSISFRSPLLEMPFNVPRIFQFPTKKQQIEILEYKKLKPISPRFLLQKGAKSDDTAKQFPSNGKDSTLKPKSYEILHDEELPDVKDKKNVSEGIKRAVAPLCEDIIETSTTLPGAIGAVESAYLDNSTEAETTLPSEAEATNPLELTESFLQNNTSMEKTPKVEKILPDDGSASPIKNNVDSKDVKTVTVPIFEEQLVSDSDDDVMLVDDSNIDVSYGDSDIEPIPVVENRQSLDIIRDLLRTATPLNSLPSRGDTVIFKLLKIKGNANSGTTEFVAGRCTYVNRRTKIVTVETITYPPEIGRMLRQYYMSGLDESSEDVRTLSIHLKDMLEAKIIVATID.

3 disordered regions span residues 87-135, 149-276, and 342-361; these read VSPA…IAEN, PGPS…KLSQ, and GAKSDDTAKQFPSNGKDSTL. The segment covering 152-181 has biased composition (polar residues); that stretch reads SVQSKLLTNKGTPKAPETQTEVSNMSANIE. Composition is skewed to basic and acidic residues over residues 223–234 and 251–272; these read TLKEGKMSESKN and KENETREEQQDKTHLESNKIPD.

The protein belongs to the coilin family. In terms of tissue distribution, in egg chambers expressed in the follicle cells, nurse cells and oocyte. Expressed in the larval brain, salivary glands, fat bodies and in the somatic hub cells at the tip of the testis. Expressed in the spermatogonia and spermatocytes, and in the adult ejaculatory duct (at protein level). Expressed in the adult Malpighian tubules.

Its subcellular location is the nucleus. The protein localises to the nucleoplasm. It localises to the cajal body. It is found in the chromosome. The protein resides in the centromere. Its subcellular location is the cytoplasm. The protein localises to the cytoskeleton. It localises to the spindle. In terms of biological role, component of nuclear coiled bodies, also known as Cajal bodies or CBs, which are involved in the modification and assembly of nucleoplasmic snRNPs. Required for Cajal body formation. In Drosophila melanogaster (Fruit fly), this protein is Coilin.